The chain runs to 635 residues: Two-component response regulator ARR18 (635 aa).

The Response regulatory domain maps to 19-133 (RVLAVDDNPT…ELQNIWHHVV (115 aa)). D70 carries the post-translational modification 4-aspartylphosphate. 2 disordered regions span residues 144–196 (LPPS…KKPR) and 323–342 (IQQG…GTYH). Over residues 166–186 (SGDEDDSDREEDDGEGSEQDG) the composition is skewed to acidic residues. Residues 193 to 196 (KKPR) carry the Nuclear localization signal motif. The myb-like GARP DNA-binding region spans 196–246 (RVVWSQELHQKFVSAVQQLGLDKAVPKKILDLMSIEGLTRENVASHLQKYR).

Belongs to the ARR family. Type-B subfamily. As to quaternary structure, binds the target DNA as a monomer. Post-translationally, two-component system major event consists of a His-to-Asp phosphorelay between a sensor histidine kinase (HK) and a response regulator (RR). In plants, the His-to-Asp phosphorelay involves an additional intermediate named Histidine-containing phosphotransfer protein (HPt). This multistep phosphorelay consists of a His-Asp-His-Asp sequential transfer of a phosphate group between first a His and an Asp of the HK protein, followed by the transfer to a conserved His of the HPt protein and finally the transfer to an Asp in the receiver domain of the RR protein. As to expression, predominantly expressed in young leaf tissue developing anthers, and siliques.

The protein resides in the nucleus. In terms of biological role, transcriptional activator that binds specifically to the DNA sequence 5'-[AG]GATT-3'. Functions as a response regulator involved in His-to-Asp phosphorelay signal transduction system. Phosphorylation of the Asp residue in the receiver domain activates the ability of the protein to promote the transcription of target genes. Could directly activate some type-A response regulators in response to cytokinins. The protein is Two-component response regulator ARR18 (ARR18) of Arabidopsis thaliana (Mouse-ear cress).